We begin with the raw amino-acid sequence, 165 residues long: Phosphopantetheine adenylyltransferase (165 aa).

Thr9 provides a ligand contact to substrate. ATP-binding positions include 9-10 (TF) and His17. Residues Lys41, Leu73, and Arg87 each contribute to the substrate site. Residues 88–90 (GLR), Glu98, and 123–129 (LQPIASR) contribute to the ATP site.

The protein belongs to the bacterial CoaD family. In terms of assembly, homohexamer. It depends on Mg(2+) as a cofactor.

Its subcellular location is the cytoplasm. The catalysed reaction is (R)-4'-phosphopantetheine + ATP + H(+) = 3'-dephospho-CoA + diphosphate. It participates in cofactor biosynthesis; coenzyme A biosynthesis; CoA from (R)-pantothenate: step 4/5. In terms of biological role, reversibly transfers an adenylyl group from ATP to 4'-phosphopantetheine, yielding dephospho-CoA (dPCoA) and pyrophosphate. In Rhizorhabdus wittichii (strain DSM 6014 / CCUG 31198 / JCM 15750 / NBRC 105917 / EY 4224 / RW1) (Sphingomonas wittichii), this protein is Phosphopantetheine adenylyltransferase.